The chain runs to 417 residues: Sulfite reductase, dissimilatory-type subunit alpha (417 aa).

Residues Cys-170, Cys-176, Cys-214, Cys-218, Cys-264, Cys-284, Cys-287, and Cys-290 each contribute to the [4Fe-4S] cluster site. Cys-218 contributes to the siroheme binding site.

[4Fe-4S] cluster serves as cofactor. Requires siroheme as cofactor.

The enzyme catalyses [DsrC protein]-trisulfide + NAD(+) + 3 H2O = [DsrC protein]-dithiol + sulfite + NADH + 3 H(+). Functionally, catalyzes the reduction of sulfite to sulfide. This is the terminal oxidation reaction in sulfate respiration. The protein is Sulfite reductase, dissimilatory-type subunit alpha (dsrA) of Allochromatium vinosum (strain ATCC 17899 / DSM 180 / NBRC 103801 / NCIMB 10441 / D) (Chromatium vinosum).